Reading from the N-terminus, the 258-residue chain is Ribonuclease PH (258 aa).

Phosphate-binding positions include R88 and 126–128; that span reads GTR.

It belongs to the RNase PH family. As to quaternary structure, homohexameric ring arranged as a trimer of dimers.

The enzyme catalyses tRNA(n+1) + phosphate = tRNA(n) + a ribonucleoside 5'-diphosphate. Phosphorolytic 3'-5' exoribonuclease that plays an important role in tRNA 3'-end maturation. Removes nucleotide residues following the 3'-CCA terminus of tRNAs; can also add nucleotides to the ends of RNA molecules by using nucleoside diphosphates as substrates, but this may not be physiologically important. Probably plays a role in initiation of 16S rRNA degradation (leading to ribosome degradation) during starvation. The protein is Ribonuclease PH of Mycobacteroides abscessus (strain ATCC 19977 / DSM 44196 / CCUG 20993 / CIP 104536 / JCM 13569 / NCTC 13031 / TMC 1543 / L948) (Mycobacterium abscessus).